We begin with the raw amino-acid sequence, 163 residues long: Phosphopantetheine adenylyltransferase (163 aa).

T10 contacts substrate. ATP-binding positions include 10 to 11 (TF) and H18. Residues K42, L74, and R88 each contribute to the substrate site. ATP is bound by residues 89–91 (GLR), E99, and 124–130 (NSFISST).

It belongs to the bacterial CoaD family. Homohexamer. The cofactor is Mg(2+).

The protein localises to the cytoplasm. It catalyses the reaction (R)-4'-phosphopantetheine + ATP + H(+) = 3'-dephospho-CoA + diphosphate. The protein operates within cofactor biosynthesis; coenzyme A biosynthesis; CoA from (R)-pantothenate: step 4/5. In terms of biological role, reversibly transfers an adenylyl group from ATP to 4'-phosphopantetheine, yielding dephospho-CoA (dPCoA) and pyrophosphate. The polypeptide is Phosphopantetheine adenylyltransferase (Shewanella sp. (strain MR-4)).